The following is a 189-amino-acid chain: Elongation factor P (189 aa).

At K34 the chain carries N6-(3,6-diaminohexanoyl)-5-hydroxylysine.

This sequence belongs to the elongation factor P family. Post-translationally, may be beta-lysylated on the epsilon-amino group of Lys-34 by the combined action of EpmA and EpmB, and then hydroxylated on the C5 position of the same residue by EpmC (if this protein is present). Lysylation is critical for the stimulatory effect of EF-P on peptide-bond formation. The lysylation moiety may extend toward the peptidyltransferase center and stabilize the terminal 3-CCA end of the tRNA. Hydroxylation of the C5 position on Lys-34 may allow additional potential stabilizing hydrogen-bond interactions with the P-tRNA.

Its subcellular location is the cytoplasm. Its pathway is protein biosynthesis; polypeptide chain elongation. Functionally, involved in peptide bond synthesis. Alleviates ribosome stalling that occurs when 3 or more consecutive Pro residues or the sequence PPG is present in a protein, possibly by augmenting the peptidyl transferase activity of the ribosome. Modification of Lys-34 is required for alleviation. The sequence is that of Elongation factor P from Legionella pneumophila (strain Lens).